Consider the following 109-residue polypeptide: Large ribosomal subunit protein bL31B (109 aa).

The tract at residues 79–109 (NVRQPAQQPQPEEDALPAAKGKKKVVTKKKK) is disordered. Basic residues predominate over residues 98–109 (KGKKKVVTKKKK).

Belongs to the bacterial ribosomal protein bL31 family. Type B subfamily. In terms of assembly, part of the 50S ribosomal subunit.

The chain is Large ribosomal subunit protein bL31B from Chlamydia pneumoniae (Chlamydophila pneumoniae).